The sequence spans 808 residues: Phospholipase D alpha 1 (808 aa).

The C2 domain maps to 1 to 125 (MAHYLMHGTL…IRGDQVDRWV (125 aa)). Residue aspartate 186 participates in Ca(2+) binding. The 39-residue stretch at 326–364 (TMFTHHQKIVVVDGEMPSGESQMRRIVSFVGGIDLCDGR) folds into the PLD phosphodiesterase 1 domain. Active-site residues include histidine 331, lysine 333, and aspartate 338. Position 331 (histidine 331) interacts with a 1,2-diacyl-sn-glycero-3-phosphate. Residues histidine 370 and histidine 404 each contribute to the Ca(2+) site. Positions 520 and 659 each coordinate a 1,2-diacyl-sn-glycero-3-phosphate. Residues 654–681 (FMIYVHTKMMIVDDEYIIVGSANINQRS) enclose the PLD phosphodiesterase 2 domain. Catalysis depends on residues histidine 659, lysine 661, and aspartate 666. Residue glutamate 720 participates in Ca(2+) binding.

Belongs to the phospholipase D family. C2-PLD subfamily. Requires Ca(2+) as cofactor.

The enzyme catalyses a 1,2-diacyl-sn-glycero-3-phosphocholine + H2O = a 1,2-diacyl-sn-glycero-3-phosphate + choline + H(+). Its function is as follows. Hydrolyzes glycerol-phospholipids at the terminal phosphodiesteric bond. Plays an important role in various cellular processes. This chain is Phospholipase D alpha 1, found in Carica papaya (Papaya).